The sequence spans 337 residues: tRNA N6-adenosine threonylcarbamoyltransferase (337 aa).

Fe cation-binding residues include His-111 and His-115. Residues 134–138 (LVSGG), Asp-167, Gly-180, and Asn-272 contribute to the substrate site. Fe cation is bound at residue Asp-300.

It belongs to the KAE1 / TsaD family. It depends on Fe(2+) as a cofactor.

It is found in the cytoplasm. It catalyses the reaction L-threonylcarbamoyladenylate + adenosine(37) in tRNA = N(6)-L-threonylcarbamoyladenosine(37) in tRNA + AMP + H(+). Required for the formation of a threonylcarbamoyl group on adenosine at position 37 (t(6)A37) in tRNAs that read codons beginning with adenine. Is involved in the transfer of the threonylcarbamoyl moiety of threonylcarbamoyl-AMP (TC-AMP) to the N6 group of A37, together with TsaE and TsaB. TsaD likely plays a direct catalytic role in this reaction. The chain is tRNA N6-adenosine threonylcarbamoyltransferase from Enterobacter sp. (strain 638).